Consider the following 542-residue polypeptide: Amino-acid acetyltransferase, mitochondrial (542 aa).

A mitochondrion-targeting transit peptide spans 1–14 (MLFRRLLTTKVGYH). Positions 368–534 (AGSAQLPAHK…LREYITYVRD (167 aa)) constitute an N-acetyltransferase domain.

It belongs to the acetyltransferase family.

The protein localises to the mitochondrion. The enzyme catalyses L-glutamate + acetyl-CoA = N-acetyl-L-glutamate + CoA + H(+). The protein operates within amino-acid biosynthesis; L-arginine biosynthesis; N(2)-acetyl-L-ornithine from L-glutamate: step 1/4. N-acetylglutamate synthase involved in arginine biosynthesis. This Eremothecium gossypii (strain ATCC 10895 / CBS 109.51 / FGSC 9923 / NRRL Y-1056) (Yeast) protein is Amino-acid acetyltransferase, mitochondrial (ARG2).